Consider the following 204-residue polypeptide: 3-dehydroquinate dehydratase (204 aa).

Residues serine 9, 30–32 (ELR), and arginine 57 contribute to the 3-dehydroquinate site. Histidine 108 (proton donor/acceptor) is an active-site residue. Lysine 133 functions as the Schiff-base intermediate with substrate in the catalytic mechanism. 3-dehydroquinate contacts are provided by arginine 167, threonine 186, and glutamine 190.

The protein belongs to the type-I 3-dehydroquinase family. Homodimer.

The catalysed reaction is 3-dehydroquinate = 3-dehydroshikimate + H2O. Its pathway is metabolic intermediate biosynthesis; chorismate biosynthesis; chorismate from D-erythrose 4-phosphate and phosphoenolpyruvate: step 3/7. Its function is as follows. Involved in the third step of the chorismate pathway, which leads to the biosynthesis of aromatic amino acids. Catalyzes the cis-dehydration of 3-dehydroquinate (DHQ) and introduces the first double bond of the aromatic ring to yield 3-dehydroshikimate. This Metallosphaera sedula (strain ATCC 51363 / DSM 5348 / JCM 9185 / NBRC 15509 / TH2) protein is 3-dehydroquinate dehydratase.